Reading from the N-terminus, the 626-residue chain is Carnitine O-acetyltransferase (626 aa).

Position 93 is an N6-succinyllysine (Lys93). An N6-acetyllysine; alternate modification is found at Lys261. Lys261 is subject to N6-succinyllysine; alternate. Lys268 is subject to N6-acetyllysine. Residue His343 is the Proton acceptor of the active site. CoA contacts are provided by residues Lys419 and 423-430 (KSEKLSPD). The (R)-carnitine site is built by Tyr452 and Ser454. Ser456 provides a ligand contact to CoA. Thr465 is a binding site for (R)-carnitine. CoA is bound by residues Arg504 and Gln555. A Microbody targeting signal motif is present at residues 624–626 (AKL).

Belongs to the carnitine/choline acetyltransferase family. In terms of assembly, monomer.

Its subcellular location is the endoplasmic reticulum. The protein localises to the peroxisome. The protein resides in the mitochondrion inner membrane. The enzyme catalyses (R)-carnitine + acetyl-CoA = O-acetyl-(R)-carnitine + CoA. It catalyses the reaction propanoyl-CoA + (R)-carnitine = O-propanoyl-(R)-carnitine + CoA. It carries out the reaction butanoyl-CoA + (R)-carnitine = O-butanoyl-(R)-carnitine + CoA. The catalysed reaction is hexanoyl-CoA + (R)-carnitine = O-hexanoyl-(R)-carnitine + CoA. The enzyme catalyses octanoyl-CoA + (R)-carnitine = O-octanoyl-(R)-carnitine + CoA. It catalyses the reaction decanoyl-CoA + (R)-carnitine = O-decanoyl-(R)-carnitine + CoA. It carries out the reaction 3-methylbutanoyl-CoA + (R)-carnitine = O-3-methylbutanoyl-(R)-carnitine + CoA. The catalysed reaction is 2-methylpropanoyl-CoA + (R)-carnitine = O-isobutanoyl-(R)-carnitine + CoA. The enzyme catalyses 2-methylbutanoyl-CoA + (R)-carnitine = O-2-methylbutanoyl-(R)-carnitine + CoA. It catalyses the reaction acetoacetyl-CoA + (R)-carnitine = O-3-oxobutanoyl-(R)-carnitine + CoA. It carries out the reaction 3-hydroxybutanoyl-CoA + (R)-carnitine = O-3-hydroxybutanoyl-(R)-carnitine + CoA. The catalysed reaction is 4,8-dimethylnonanoyl-CoA + (R)-carnitine = O-4,8-dimethylnonanoyl-(R)-carnitine + CoA. The enzyme catalyses 2,6-dimethylheptanoyl-CoA + (R)-carnitine = O-2,6-dimethylheptanoyl-(R)-carnitine + CoA. Functionally, catalyzes the reversible transfer of acyl groups from carnitine to coenzyme A (CoA) and regulates the acyl-CoA/CoA ratio. Also plays a crucial role in the transport of fatty acids for beta-oxidation. Responsible for the synthesis of short- and branched-chain acylcarnitines. Active towards some branched-chain amino acid oxidation pathway (BCAAO) intermediates. Trans-2-enoyl-CoAs and 2-methylacyl-CoAs are poor substrates. In Mus musculus (Mouse), this protein is Carnitine O-acetyltransferase.